The primary structure comprises 979 residues: Collagen alpha-2(I) chain (979 aa).

Residues serine 1 to alanine 979 are disordered. A 4-hydroxyproline mark is found at proline 10, proline 13, proline 38, and proline 44. Residues leucine 24–proline 70 are compositionally biased toward low complexity. Lysine 99 is modified (5-hydroxylysine; alternate). Residue lysine 99 is glycosylated (O-linked (Gal...) hydroxylysine; alternate). 4 stretches are compositionally biased toward low complexity: residues valine 147 to proline 176, proline 222 to lysine 263, serine 272 to serine 282, and arginine 312 to arginine 331. Residues proline 334 and proline 337 each carry the 4-hydroxyproline modification. Over residues leucine 363–alanine 382 the composition is skewed to low complexity. Residues glycine 427 to glycine 436 show a composition bias toward gly residues. Low complexity predominate over residues proline 483–proline 500. Positions glycine 517–glycine 527 are enriched in gly residues. Composition is skewed to low complexity over residues valine 550–serine 594 and valine 601–alanine 621. The segment covering lysine 622 to lysine 631 has biased composition (basic and acidic residues). The span at proline 639–alanine 649 shows a compositional bias: low complexity. Over residues glycine 659–glycine 668 the composition is skewed to gly residues. A compositionally biased stretch (low complexity) spans alanine 669 to threonine 679. Residues glycine 710–glycine 724 show a composition bias toward gly residues. Composition is skewed to low complexity over residues phenylalanine 725–proline 759 and leucine 767–proline 777. Gly residues predominate over residues glycine 778–arginine 788. A compositionally biased stretch (low complexity) spans glutamate 840 to proline 855. Over residues arginine 865–proline 876 the composition is skewed to basic and acidic residues. Positions serine 949 to proline 961 are enriched in pro residues.

The protein belongs to the fibrillar collagen family. Trimers of one alpha 2(I) and two alpha 1(I) chains. Interacts (via C-terminus) with TMEM131 (via PapD-L domain); the interaction is direct and is involved in assembly and TRAPPIII ER-to-Golgi transport complex-dependent secretion of collagen. In terms of processing, prolines at the third position of the tripeptide repeating unit (G-X-Y) are hydroxylated in some or all of the chains. Expressed in bones.

It localises to the secreted. The protein resides in the extracellular space. Its subcellular location is the extracellular matrix. Functionally, type I collagen is a member of group I collagen (fibrillar forming collagen). In Bradypus variegatus (Brown-throated three-fingered sloth), this protein is Collagen alpha-2(I) chain.